We begin with the raw amino-acid sequence, 467 residues long: Ribulose bisphosphate carboxylase large chain (467 aa).

A propeptide spanning residues 1–2 (MS) is cleaved from the precursor. Pro-3 carries the post-translational modification N-acetylproline. At Lys-14 the chain carries N6,N6,N6-trimethyllysine. Substrate-binding residues include Asn-123 and Thr-173. Lys-175 serves as the catalytic Proton acceptor. Lys-177 serves as a coordination point for substrate. Mg(2+) is bound by residues Lys-201, Asp-203, and Glu-204. Lys-201 carries the post-translational modification N6-carboxylysine. The active-site Proton acceptor is His-294. Arg-295, His-327, and Ser-379 together coordinate substrate.

The protein belongs to the RuBisCO large chain family. Type I subfamily. In terms of assembly, heterohexadecamer of 8 large chains and 8 small chains; disulfide-linked. The disulfide link is formed within the large subunit homodimers. Requires Mg(2+) as cofactor. The disulfide bond which can form in the large chain dimeric partners within the hexadecamer appears to be associated with oxidative stress and protein turnover.

The protein resides in the plastid. It is found in the chloroplast. It catalyses the reaction 2 (2R)-3-phosphoglycerate + 2 H(+) = D-ribulose 1,5-bisphosphate + CO2 + H2O. The enzyme catalyses D-ribulose 1,5-bisphosphate + O2 = 2-phosphoglycolate + (2R)-3-phosphoglycerate + 2 H(+). Functionally, ruBisCO catalyzes two reactions: the carboxylation of D-ribulose 1,5-bisphosphate, the primary event in carbon dioxide fixation, as well as the oxidative fragmentation of the pentose substrate in the photorespiration process. Both reactions occur simultaneously and in competition at the same active site. The sequence is that of Ribulose bisphosphate carboxylase large chain from Phoenix reclinata (Senegal date palm).